The sequence spans 79 residues: MKSLTWILGLWALAACFTPGESQRGPRGPYPPGPLAPPQPFGPGFVPPPPPPPYGPGRIPPPPPAPYGPGIFPPPPPQP.

The N-terminal stretch at 1 to 22 (MKSLTWILGLWALAACFTPGES) is a signal peptide. Residues 19 to 79 (PGESQRGPRG…GIFPPPPPQP (61 aa)) are disordered. Residue glutamine 23 is modified to Pyrrolidone carboxylic acid. The segment covering 28-79 (GPYPPGPLAPPQPFGPGFVPPPPPPPYGPGRIPPPPPAPYGPGIFPPPPPQP) has biased composition (pro residues).

The protein belongs to the PROL1/PROL3 family. In terms of processing, P-A and D1A are probably degradation products of P-B. In terms of tissue distribution, secreted into saliva by submaxillary gland. Not expressed in heart, brain, lung, liver, skeletal muscle, Kidney, pancreas or placenta.

It is found in the secreted. This chain is Submaxillary gland androgen-regulated protein 3B (SMR3B), found in Homo sapiens (Human).